Consider the following 278-residue polypeptide: 4-deoxy-L-threo-5-hexosulose-uronate ketol-isomerase (278 aa).

The Zn(2+) site is built by His196, His198, Glu203, and His245.

Belongs to the KduI family. Zn(2+) is required as a cofactor.

It carries out the reaction 5-dehydro-4-deoxy-D-glucuronate = 3-deoxy-D-glycero-2,5-hexodiulosonate. It participates in glycan metabolism; pectin degradation; 2-dehydro-3-deoxy-D-gluconate from pectin: step 4/5. Functionally, catalyzes the isomerization of 5-dehydro-4-deoxy-D-glucuronate to 3-deoxy-D-glycero-2,5-hexodiulosonate. The sequence is that of 4-deoxy-L-threo-5-hexosulose-uronate ketol-isomerase from Salmonella choleraesuis (strain SC-B67).